Reading from the N-terminus, the 392-residue chain is Acyl-CoA dehydrogenase IpdE1 (392 aa).

FAD-binding positions include 126-129 (QGYS) and S171. E254 (proton acceptor) is an active-site residue. 371 to 373 (SNE) lines the FAD pocket.

Belongs to the acyl-CoA dehydrogenase family. In terms of assembly, heterotetramer composed of 2 IpdE1 subunits and 2 IpdE2 subunits. The cofactor is FAD.

The enzyme catalyses 3-[(3aS,4S,5R,7aS)-5-hydroxy-7a-methyl-1-oxo-octahydro-1H-inden-4-yl]propanoyl-CoA + A = (2E)-3-[(3aS,4S,5R,7aS)-5-hydroxy-7a-methyl-1-oxo-octahydro-1H-inden-4-yl]prop-2-enoyl-CoA + AH2. It participates in steroid metabolism; cholesterol degradation. In terms of biological role, involved in cholesterol degradation. Catalyzes the dehydrogenation of 5OH-HIP-CoA to 5OH-HIPE-CoA. The protein is Acyl-CoA dehydrogenase IpdE1 of Mycolicibacterium smegmatis (strain ATCC 700084 / mc(2)155) (Mycobacterium smegmatis).